Reading from the N-terminus, the 286-residue chain is Undecaprenyl-diphosphatase (286 aa).

Helical transmembrane passes span 17–37 (VVLGIVQGLTEFLPISSTAHL), 49–69 (PGVAVTAVIQLGSIAAVIGYF), 98–118 (IAIAVGTLPVVVAGLLIKLFW), 126–146 (LRSVASIGIVSIVMALLLALA), 159–179 (VQGLDGVVVGLAQALAIIPGV), 204–224 (FLLGIPAITLAGLVELKGAFA), 232–252 (LPMLLGILSAAVVSWLAIAWL), and 261–281 (TWPFVIYRLVFGVVLLALVLA).

This sequence belongs to the UppP family.

The protein resides in the cell inner membrane. It carries out the reaction di-trans,octa-cis-undecaprenyl diphosphate + H2O = di-trans,octa-cis-undecaprenyl phosphate + phosphate + H(+). Functionally, catalyzes the dephosphorylation of undecaprenyl diphosphate (UPP). Confers resistance to bacitracin. This is Undecaprenyl-diphosphatase from Synechococcus sp. (strain RCC307).